The primary structure comprises 300 residues: Tegument protein VP22 (300 aa).

The interval 1 to 148 (MTSRRSVKSC…PARGRRPAQA (148 aa)) is disordered. 2 stretches are compositionally biased toward basic and acidic residues: residues 10–22 (CPREAPRGTHEEL) and 50–61 (PRGEVRFLHYDE). The Nuclear localization signal motif lies at 163-166 (GRTK). Positions 174-267 (KKLHFSTAPP…LVNPDAAQDV (94 aa)) are interaction with gE. The Nuclear export signal motif lies at 232–244 (LNELLDLTTIRVT). Low complexity predominate over residues 269–292 (ATAAARGRPAGRAAATARAPARSA). The segment at 269-300 (ATAAARGRPAGRAAATARAPARSASRPRRPLE) is disordered.

Belongs to the alphaherpesvirinae VP22 tegument protein family. Interacts with gE (via C-terminus); this interaction is necessary for the recruitment of VP22 to the Golgi and its packaging into virions. Interacts with gM (via C-terminus). Interacts with VP16; this interaction allows the formation of a tripartite complex composed of VP16, VP22 and UL41/VHS. Interacts with the capsid-binding protein UL16. Interacts with host CGAS. Highly phosphorylated in the host cell. Packaging is selective for underphosphorylated forms.

It is found in the virion tegument. The protein resides in the host cytoplasm. The protein localises to the host nucleus. Its subcellular location is the host Golgi apparatus. In terms of biological role, tegument protein that plays different roles during the time course of infection. Participates in both the accumulation of viral mRNAs and viral protein translation at late time of infection. Modulates the RNase activity of the virion host shutoff protein UL41 probably to ensure necessary levels of key cellular mRNAs and proteins. Plays a role in microtubule reorganization that occurs after viral infection by stabilizing microtubule network. Plays a role in the inhibition of host innate immune system by targeting the CGAS enzymatic activity which is the principal cytosolic DNA sensor that detects invading viral DNA. Acts by mediating disruption of liquid-like droplets in which CGAS is activated, thereby preventing CGAS activity. This chain is Tegument protein VP22, found in Homo sapiens (Human).